The chain runs to 495 residues: Cytochrome P450 monooxygenase aneF (495 aa).

Residues 1-21 (MIAGLVLVVLLTKYLQRVFLH) form a helical membrane-spanning segment. Asn-47 carries N-linked (GlcNAc...) asparagine glycosylation. Residue Cys-437 participates in heme binding.

Belongs to the cytochrome P450 family. The cofactor is heme.

The protein resides in the membrane. The catalysed reaction is dauca-4,7-diene + 3 reduced [NADPH--hemoprotein reductase] + 3 O2 = asperaculane D + 3 oxidized [NADPH--hemoprotein reductase] + 4 H2O + 4 H(+). It participates in secondary metabolite biosynthesis. Functionally, cytochrome P450 monooxygenase; part of the gene cluster that mediates the biosynthesis of aculenes, a unique type of norsesquiterpenes that contain a nordaucane skeleton linked to an L-proline moiety and are of mixed biosynthetic origin. The pathway begins with the synthesis of dauca-4,7-diene by the terpene cyclase aneC using farnesyl pyrophosphate (FPP) as substrate. The cytochrome P450 monooxygenase aneF then performs the initial oxidation at C-12 of dauca-4,7-diene to yield asperaculane D. Asperaculane D is substrate of the cytochrome P450 monooxygenase aneD for C-10 hydroxylation to yield asperaculane E. The cytochrome P450 monooxygenase aneG then converts asperaculane E into aculene D via C-2 oxidation. The monomodular nonribosomal peptide synthtase aneB adenylates L-proline and the thiohydrolase aneE transfers this activated L-proline derivative to aculenes D and C to produce respectively aculenes B and A. The dioxygenase aneA converts aculene D into aculene C, and aculene B into aculene A by introducing the 5,6-alkene moiety. Asperculanes A, B, C and F, as well as 14-prolyl asperculane C, might be shunt products of the pathway. The polypeptide is Cytochrome P450 monooxygenase aneF (Aspergillus aculeatus (strain ATCC 16872 / CBS 172.66 / WB 5094)).